We begin with the raw amino-acid sequence, 946 residues long: DNA ligase 4 (946 aa).

The ATP site is built by Glu-295, Lys-297, Arg-302, Glu-355, Phe-397, Glu-457, Lys-462, Lys-479, and Lys-481. The active-site N6-AMP-lysine intermediate is Lys-297. Residue Glu-355 participates in Mg(2+) binding. Mg(2+) is bound at residue Glu-457. BRCT domains are found at residues 688–787 (HRSD…PSHC) and 845–945 (VPHF…NYRL).

It belongs to the ATP-dependent DNA ligase family. Mg(2+) is required as a cofactor.

It is found in the nucleus. It carries out the reaction ATP + (deoxyribonucleotide)n-3'-hydroxyl + 5'-phospho-(deoxyribonucleotide)m = (deoxyribonucleotide)n+m + AMP + diphosphate.. Functionally, DNA ligase involved in DNA non-homologous end joining (NHEJ); required for double-strand break (DSB) repair. The chain is DNA ligase 4 (LIG4) from Candida glabrata (strain ATCC 2001 / BCRC 20586 / JCM 3761 / NBRC 0622 / NRRL Y-65 / CBS 138) (Yeast).